The chain runs to 469 residues: Aspartyl/glutamyl-tRNA(Asn/Gln) amidotransferase subunit B (469 aa).

Belongs to the GatB/GatE family. GatB subfamily. Heterotrimer of A, B and C subunits.

The enzyme catalyses L-glutamyl-tRNA(Gln) + L-glutamine + ATP + H2O = L-glutaminyl-tRNA(Gln) + L-glutamate + ADP + phosphate + H(+). The catalysed reaction is L-aspartyl-tRNA(Asn) + L-glutamine + ATP + H2O = L-asparaginyl-tRNA(Asn) + L-glutamate + ADP + phosphate + 2 H(+). Functionally, allows the formation of correctly charged Asn-tRNA(Asn) or Gln-tRNA(Gln) through the transamidation of misacylated Asp-tRNA(Asn) or Glu-tRNA(Gln) in organisms which lack either or both of asparaginyl-tRNA or glutaminyl-tRNA synthetases. The reaction takes place in the presence of glutamine and ATP through an activated phospho-Asp-tRNA(Asn) or phospho-Glu-tRNA(Gln). The chain is Aspartyl/glutamyl-tRNA(Asn/Gln) amidotransferase subunit B from Methanococcus maripaludis (strain C5 / ATCC BAA-1333).